The chain runs to 405 residues: Exodeoxyribonuclease 7 large subunit (405 aa).

This sequence belongs to the XseA family. Heterooligomer composed of large and small subunits.

The protein localises to the cytoplasm. It catalyses the reaction Exonucleolytic cleavage in either 5'- to 3'- or 3'- to 5'-direction to yield nucleoside 5'-phosphates.. In terms of biological role, bidirectionally degrades single-stranded DNA into large acid-insoluble oligonucleotides, which are then degraded further into small acid-soluble oligonucleotides. This chain is Exodeoxyribonuclease 7 large subunit, found in Halothermothrix orenii (strain H 168 / OCM 544 / DSM 9562).